The chain runs to 717 residues: Proline-rich receptor-like protein kinase PERK2 (717 aa).

Pro residues predominate over residues 1–197; sequence MSSAPPPGGT…GSLSPPPPAS (197 aa). A disordered region spans residues 1 to 221; it reads MSSAPPPGGT…GSSPPAQSSK (221 aa). Over 1–228 the chain is Extracellular; that stretch reads MSSAPPPGGT…SSKELSKGAM (228 aa). Positions 198–220 are enriched in low complexity; that stretch reads PSGGRSPSTPSTTPGSSPPAQSS. The chain crosses the membrane as a helical span at residues 229-249; the sequence is VGIAIGGGFVLLVALALIFFL. Over 250 to 717 the chain is Cytoplasmic; sequence CKKKRRRDNE…NIKRPGQGYG (468 aa). Residues 258–323 form a disordered region; the sequence is NEAPPAPIDG…YDSNYSDQSV (66 aa). Positions 289 to 303 are enriched in pro residues; it reads VPPPKSPSSAPPRPP. Low complexity predominate over residues 307–322; sequence SSGSSGDYDSNYSDQS. A Protein kinase domain is found at 354-631; the sequence is FSEANLLGQG…QVARVLEGNI (278 aa). Residues 360-368 and lysine 382 contribute to the ATP site; that span reads LGQGGFGYV. Aspartate 478 (proton acceptor) is an active-site residue. Polar residues-rich tracts occupy residues 632 to 644 and 692 to 705; these read SPSD…TPGH and SWSS…QGKA. 2 disordered regions span residues 632-665 and 690-717; these read SPSD…DNEG and YPSW…QGYG.

The protein belongs to the protein kinase superfamily. Ser/Thr protein kinase family. Mostly expressed in inflorescence bolt, flower buds and siliques, and, to a lower extent, in roots, seedlings and leaves.

The protein resides in the cell membrane. It carries out the reaction L-seryl-[protein] + ATP = O-phospho-L-seryl-[protein] + ADP + H(+). The enzyme catalyses L-threonyl-[protein] + ATP = O-phospho-L-threonyl-[protein] + ADP + H(+). In Arabidopsis thaliana (Mouse-ear cress), this protein is Proline-rich receptor-like protein kinase PERK2 (PERK2).